Here is a 39-residue protein sequence, read N- to C-terminus: Protein MchX (39 aa).

Residues 15-37 (SALSSTLLLSLIMSATLLEYSLS) form a helical membrane-spanning segment.

The protein resides in the cell inner membrane. Required for microcin H47 production. Possibly involved in a regulatory loop modulating its own expression and that of MchI and MchB. This is Protein MchX (mchX) from Escherichia coli.